Here is a 212-residue protein sequence, read N- to C-terminus: Ropporin-1 (212 aa).

The RIIa domain maps to 12–43 (PELPELLKQFTKAAIRSQPQDLIQWAAEYFGA). Ser56 bears the Phosphoserine mark. The tract at residues 209-212 (VRLE) is interaction with RHPN1.

Belongs to the ropporin family. In terms of assembly, homodimer. Interacts with AKAP3. May interact with SPA17. Interacts with RHPN1. Interacts with FSCB; the interaction increases upon spermatozoa capacitation conditions. Interacts with CFAP61. Post-translationally, sumoylated, sumoylation decreases upon spermatozoa capacitation conditions.

Its subcellular location is the cell projection. The protein localises to the cilium. The protein resides in the flagellum. Its function is as follows. Important for male fertility. With ROPN1L, involved in fibrous sheath integrity and sperm motility, plays a role in PKA-dependent signaling processes required for spermatozoa capacitation. The chain is Ropporin-1 (ROPN1) from Bos taurus (Bovine).